Reading from the N-terminus, the 117-residue chain is Protein TCL1B2 (117 aa).

Belongs to the TCL1 family.

The sequence is that of Protein TCL1B2 (Tcl1b2) from Mus musculus (Mouse).